We begin with the raw amino-acid sequence, 412 residues long: Phytoene synthase, chloroplastic (412 aa).

Belongs to the phytoene/squalene synthase family. Monomer. Expressed in roots, leaves, flower buds, sepals, petals, lips and lip crests.

It localises to the plastid. Its subcellular location is the chloroplast. It catalyses the reaction 2 (2E,6E,10E)-geranylgeranyl diphosphate = 15-cis-phytoene + 2 diphosphate. It participates in carotenoid biosynthesis; phytoene biosynthesis; all-trans-phytoene from geranylgeranyl diphosphate: step 1/1. Its function is as follows. Catalyzes the reaction from prephytoene diphosphate to phytoene. The sequence is that of Phytoene synthase, chloroplastic (PSY) from Oncidium hybrid cultivar (Orchid).